The chain runs to 475 residues: MGKDVKKVHKLRHDPLSKQIEESESAYQKPHKRVGKLRKKKAEMENDTGIDETESVIPSALSKKILDQIREQAIEVEVEDRKKEKQEKLLTFEQERIQSKLLSFNDFIDDDDDDEDADQDDNKRRSNGNDFDENDGFEQFSDTESQFGVGGEVEIDEEDERVLSMFMGGGGGDGQEQQFQTRFTLGDIIESKLKEHESRQVSSENAINPKVIDVYTKVGKLLETYTSGKIPRAFRILPNFTNWEDLLYLTRPDKWTPHSIRVATKLFCMSTNSKITQRFLSIVVLPRVRDNIAEYKKLNYHLYMALKKSLYRPAAFYKAILLPLAESGDCTLLEAKIIGSVVCKVSIPVLHSSVALMKLSQLTRYNGATSMFIRMLCDKKYALPYRVIDGLVDHFVMFDEEVRELPVLWHRALLSFVQRYKTDITKDQKEKLKIILRKHNHHIITAEIRRELFFSNSRGGVAPSNFTDDTSSMME.

2 stretches are compositionally biased toward basic residues: residues 1–12 (MGKDVKKVHKLR) and 29–41 (KPHK…RKKK). 2 disordered regions span residues 1 to 57 (MGKD…ESVI) and 106 to 149 (DFID…QFGV). Acidic residues-rich tracts occupy residues 45 to 54 (ENDTGIDETE) and 107 to 119 (FIDD…DADQ).

Belongs to the bystin family.

Its subcellular location is the nucleus. It is found in the nucleolus. Functionally, required for processing of 20S pre-rRNA precursor and biogenesis of 40S ribosomal subunits. The polypeptide is Bystin (bysl) (Dictyostelium discoideum (Social amoeba)).